The chain runs to 699 residues: Elongation factor G (699 aa).

In terms of domain architecture, tr-type G spans 8-287; the sequence is EKLRNIGIVA…AVIDYLPSPI (280 aa). Residues 17–24, 85–89, and 139–142 contribute to the GTP site; these read AHIDAGKT, DTPGH, and NKMD.

It belongs to the TRAFAC class translation factor GTPase superfamily. Classic translation factor GTPase family. EF-G/EF-2 subfamily.

The protein localises to the cytoplasm. In terms of biological role, catalyzes the GTP-dependent ribosomal translocation step during translation elongation. During this step, the ribosome changes from the pre-translocational (PRE) to the post-translocational (POST) state as the newly formed A-site-bound peptidyl-tRNA and P-site-bound deacylated tRNA move to the P and E sites, respectively. Catalyzes the coordinated movement of the two tRNA molecules, the mRNA and conformational changes in the ribosome. This chain is Elongation factor G (fusA), found in Aquifex aeolicus (strain VF5).